Here is a 279-residue protein sequence, read N- to C-terminus: MNYQDNSLKSLKLGQKTEYASQYDRTLLQPVPRALNRDGLGITQNQPFTIGADIWTAYEISWLNEKGLPQVAIADIYLDYQSQNLIESKSFKLYLNSFNQSKFTDFNAVQQTMQRDLIECAQGDVKVRLNPVAVYDAQKIEHLQGDCIDEQDIEITSYEFNANWLKDCVSDEIVEEKLVSHLLKSNCLITNQPDWGTLHIHYVGKKINHEKLLRYVVSFRQHNEFHEQCVERIFCDLMHYAKPEKLTVYARYTRRGGLDINPFRSNFENLPENLRLARQ.

86–88 is a substrate binding site; the sequence is IES. 88 to 89 contacts NADPH; that stretch reads SK. The active-site Thioimide intermediate is the Cys-187. Asp-194 serves as the catalytic Proton donor. 226 to 227 provides a ligand contact to substrate; sequence HE. 255–256 contributes to the NADPH binding site; that stretch reads RG.

This sequence belongs to the GTP cyclohydrolase I family. QueF type 2 subfamily. In terms of assembly, homodimer.

The protein resides in the cytoplasm. The enzyme catalyses 7-aminomethyl-7-carbaguanine + 2 NADP(+) = 7-cyano-7-deazaguanine + 2 NADPH + 3 H(+). Its pathway is tRNA modification; tRNA-queuosine biosynthesis. Functionally, catalyzes the NADPH-dependent reduction of 7-cyano-7-deazaguanine (preQ0) to 7-aminomethyl-7-deazaguanine (preQ1). The protein is NADPH-dependent 7-cyano-7-deazaguanine reductase of Haemophilus influenzae (strain PittGG).